A 171-amino-acid chain; its full sequence is Small ribosomal subunit protein mS41 (171 aa).

The N-terminal 23 residues, 1–23 (MSLFKSLVARSGSGIRAAQIARQ), are a transit peptide targeting the mitochondrion. The tract at residues 122 to 141 (REHKKGKKKNGGERNAKTVL) is disordered.

This sequence belongs to the mitochondrion-specific ribosomal protein mS41 family.

The protein resides in the mitochondrion. Involved in telomere length regulation. The polypeptide is Small ribosomal subunit protein mS41 (FYV4) (Scheffersomyces stipitis (strain ATCC 58785 / CBS 6054 / NBRC 10063 / NRRL Y-11545) (Yeast)).